Consider the following 474-residue polypeptide: Glutamate--tRNA ligase (474 aa).

The 'HIGH' region signature appears at 9 to 19; that stretch reads PSPTGYLHVGG. The 'KMSKS' region motif lies at 240–244; sequence KLSKR. Position 243 (lysine 243) interacts with ATP.

Belongs to the class-I aminoacyl-tRNA synthetase family. Glutamate--tRNA ligase type 1 subfamily. As to quaternary structure, monomer.

It localises to the cytoplasm. The enzyme catalyses tRNA(Glu) + L-glutamate + ATP = L-glutamyl-tRNA(Glu) + AMP + diphosphate. Its function is as follows. Catalyzes the attachment of glutamate to tRNA(Glu) in a two-step reaction: glutamate is first activated by ATP to form Glu-AMP and then transferred to the acceptor end of tRNA(Glu). In Vibrio parahaemolyticus serotype O3:K6 (strain RIMD 2210633), this protein is Glutamate--tRNA ligase.